The following is a 201-amino-acid chain: ATP synthase subunit delta (201 aa).

Belongs to the ATPase delta chain family. In terms of assembly, F-type ATPases have 2 components, F(1) - the catalytic core - and F(0) - the membrane proton channel. F(1) has five subunits: alpha(3), beta(3), gamma(1), delta(1), epsilon(1). F(0) has three main subunits: a(1), b(2) and c(10-14). The alpha and beta chains form an alternating ring which encloses part of the gamma chain. F(1) is attached to F(0) by a central stalk formed by the gamma and epsilon chains, while a peripheral stalk is formed by the delta and b chains.

The protein localises to the cell inner membrane. In terms of biological role, f(1)F(0) ATP synthase produces ATP from ADP in the presence of a proton or sodium gradient. F-type ATPases consist of two structural domains, F(1) containing the extramembraneous catalytic core and F(0) containing the membrane proton channel, linked together by a central stalk and a peripheral stalk. During catalysis, ATP synthesis in the catalytic domain of F(1) is coupled via a rotary mechanism of the central stalk subunits to proton translocation. This protein is part of the stalk that links CF(0) to CF(1). It either transmits conformational changes from CF(0) to CF(1) or is implicated in proton conduction. This chain is ATP synthase subunit delta, found in Xanthobacter autotrophicus (strain ATCC BAA-1158 / Py2).